Consider the following 58-residue polypeptide: Large ribosomal subunit protein uL30 (58 aa).

This sequence belongs to the universal ribosomal protein uL30 family. Part of the 50S ribosomal subunit.

The protein is Large ribosomal subunit protein uL30 of Bacteroides fragilis (strain ATCC 25285 / DSM 2151 / CCUG 4856 / JCM 11019 / LMG 10263 / NCTC 9343 / Onslow / VPI 2553 / EN-2).